Here is a 244-residue protein sequence, read N- to C-terminus: Phosphoadenosine 5'-phosphosulfate reductase (244 aa).

Cys239 functions as the Nucleophile; cysteine thiosulfonate intermediate in the catalytic mechanism.

Belongs to the PAPS reductase family. CysH subfamily.

It localises to the cytoplasm. The catalysed reaction is [thioredoxin]-disulfide + sulfite + adenosine 3',5'-bisphosphate + 2 H(+) = [thioredoxin]-dithiol + 3'-phosphoadenylyl sulfate. The protein operates within sulfur metabolism; hydrogen sulfide biosynthesis; sulfite from sulfate: step 3/3. In terms of biological role, catalyzes the formation of sulfite from phosphoadenosine 5'-phosphosulfate (PAPS) using thioredoxin as an electron donor. In Salmonella heidelberg (strain SL476), this protein is Phosphoadenosine 5'-phosphosulfate reductase.